Consider the following 303-residue polypeptide: Uricase (303 aa).

Catalysis depends on charge relay system residues K12 and T60. Residues T60, D61, F162, R179, V234, Q235, and N261 each coordinate urate. H263 acts as the Charge relay system in catalysis. Residues 301-303 (TKL) carry the Microbody targeting signal motif.

It belongs to the uricase family.

The protein localises to the peroxisome. It catalyses the reaction urate + O2 + H2O = 5-hydroxyisourate + H2O2. It participates in purine metabolism; urate degradation; (S)-allantoin from urate: step 1/3. Catalyzes the oxidation of uric acid to 5-hydroxyisourate, which is further processed to form (S)-allantoin. The sequence is that of Uricase from Cyberlindnera jadinii (Torula yeast).